The primary structure comprises 283 residues: Elongation factor Ts (283 aa).

Residues 79–82 (TDFV) are involved in Mg(2+) ion dislocation from EF-Tu.

This sequence belongs to the EF-Ts family.

It is found in the cytoplasm. In terms of biological role, associates with the EF-Tu.GDP complex and induces the exchange of GDP to GTP. It remains bound to the aminoacyl-tRNA.EF-Tu.GTP complex up to the GTP hydrolysis stage on the ribosome. This chain is Elongation factor Ts, found in Shewanella frigidimarina (strain NCIMB 400).